A 110-amino-acid chain; its full sequence is Parvalbumin alpha (110 aa).

At Ser-2 the chain carries N-acetylserine. Ser-2, Ser-8, and Ser-24 each carry phosphoserine. 2 EF-hand domains span residues 39 to 74 and 78 to 110; these read KSAD…FSSD and LSAK…VAES. Ca(2+) is bound by residues Asp-52, Asp-54, Ser-56, Phe-58, Glu-60, and Glu-63. At Ser-66 the chain carries Phosphoserine. Positions 91, 93, 95, 97, and 102 each coordinate Ca(2+).

In terms of biological role, in muscle, parvalbumin is thought to be involved in relaxation after contraction. It binds two calcium ions. The sequence is that of Parvalbumin alpha (Pvalb) from Rattus norvegicus (Rat).